A 230-amino-acid chain; its full sequence is Ribonuclease 3 (230 aa).

The RNase III domain maps to 5-134 (EALLENSFNI…FLGALLLDKG (130 aa)). Glu47 is a Mg(2+) binding site. Residue Asp51 is part of the active site. Mg(2+) contacts are provided by Asp120 and Glu123. Residue Glu123 is part of the active site. The 70-residue stretch at 160-229 (DYKTCLQELL…AKNALAQLSE (70 aa)) folds into the DRBM domain.

This sequence belongs to the ribonuclease III family. Homodimer. The cofactor is Mg(2+).

The protein resides in the cytoplasm. It carries out the reaction Endonucleolytic cleavage to 5'-phosphomonoester.. In terms of biological role, digests double-stranded RNA. Involved in the processing of primary rRNA transcript to yield the immediate precursors to the large and small rRNAs (23S and 16S). Processes some mRNAs, and tRNAs when they are encoded in the rRNA operon. Processes pre-crRNA and tracrRNA of type II CRISPR loci if present in the organism. The protein is Ribonuclease 3 of Streptococcus equi subsp. zooepidemicus (strain H70).